The sequence spans 222 residues: Deoxyribose-phosphate aldolase (222 aa).

Aspartate 94 serves as the catalytic Proton donor/acceptor. Lysine 156 (schiff-base intermediate with acetaldehyde) is an active-site residue. Lysine 185 serves as the catalytic Proton donor/acceptor.

Belongs to the DeoC/FbaB aldolase family. DeoC type 1 subfamily.

It localises to the cytoplasm. It carries out the reaction 2-deoxy-D-ribose 5-phosphate = D-glyceraldehyde 3-phosphate + acetaldehyde. It functions in the pathway carbohydrate degradation; 2-deoxy-D-ribose 1-phosphate degradation; D-glyceraldehyde 3-phosphate and acetaldehyde from 2-deoxy-alpha-D-ribose 1-phosphate: step 2/2. In terms of biological role, catalyzes a reversible aldol reaction between acetaldehyde and D-glyceraldehyde 3-phosphate to generate 2-deoxy-D-ribose 5-phosphate. In Malacoplasma penetrans (strain HF-2) (Mycoplasma penetrans), this protein is Deoxyribose-phosphate aldolase.